The primary structure comprises 489 residues: Rhamnulokinase (489 aa).

13 to 17 (ASSGR) contacts ATP. Cys-68 and Cys-222 form a disulfide bridge. Substrate-binding positions include Gly-83 and 236-238 (HDT). Asp-237 acts as the Proton acceptor in catalysis. Residue Thr-259 participates in ATP binding. Substrate is bound at residue Asn-296. Gln-304 serves as a coordination point for ATP. A disulfide bridge links Cys-353 with Cys-370. An ATP-binding site is contributed by Gly-402. Residues Cys-413 and Cys-417 are joined by a disulfide bond.

Belongs to the rhamnulokinase family. The cofactor is Mg(2+).

It catalyses the reaction L-rhamnulose + ATP = L-rhamnulose 1-phosphate + ADP + H(+). Its pathway is carbohydrate degradation; L-rhamnose degradation; glycerone phosphate from L-rhamnose: step 2/3. Its function is as follows. Involved in the catabolism of L-rhamnose (6-deoxy-L-mannose). Catalyzes the transfer of the gamma-phosphate group from ATP to the 1-hydroxyl group of L-rhamnulose to yield L-rhamnulose 1-phosphate. This is Rhamnulokinase from Salmonella typhi.